The following is a 301-amino-acid chain: L-threonate dehydrogenase (301 aa).

NAD(+)-binding positions include 6-34 and Thr101; that span reads YSVAVIGLGSMGMGAAVSCINAGLTTYGI. Lys177 is an active-site residue. An NAD(+)-binding site is contributed by Lys245.

The protein belongs to the HIBADH-related family. L-threonate dehydrogenase subfamily.

The catalysed reaction is L-threonate + NAD(+) = 2-dehydro-L-erythronate + NADH + H(+). Functionally, catalyzes oxidation of L-threonate to 2-oxo-tetronate. Can use either NAD(+) or NADP(+) as cosubstrate, with a preference for NAD(+). The polypeptide is L-threonate dehydrogenase (Haemophilus influenzae (strain ATCC 51907 / DSM 11121 / KW20 / Rd)).